Here is a 395-residue protein sequence, read N- to C-terminus: Digeranylgeranylglycerophospholipid reductase (395 aa).

Residues Ala15, Asp34, Cys45, Ala46, Gly48, Arg97, Ala121, Asp276, and Gly288 each coordinate FAD. A 2,3-bis-O-(geranylgeranyl)-sn-glycerol 1-phospholipid is bound by residues Arg329 and Gly365.

Belongs to the geranylgeranyl reductase family. DGGGPL reductase subfamily. FAD is required as a cofactor.

It catalyses the reaction a 2,3-bis-O-phytanyl-sn-glycerol 1-phospholipid + 8 A = a 2,3-bis-O-(geranylgeranyl)-sn-glycerol 1-phospholipid + 8 AH2. The enzyme catalyses 2,3-bis-O-(phytanyl)-sn-glycerol 1-phosphate + 8 A = 2,3-bis-O-(geranylgeranyl)-sn-glycerol 1-phosphate + 8 AH2. The catalysed reaction is CDP-2,3-bis-O-(geranylgeranyl)-sn-glycerol + 8 AH2 = CDP-2,3-bis-O-(phytanyl)-sn-glycerol + 8 A. It carries out the reaction archaetidylserine + 8 AH2 = 2,3-bis-O-phytanyl-sn-glycero-3-phospho-L-serine + 8 A. It functions in the pathway membrane lipid metabolism; glycerophospholipid metabolism. Functionally, is involved in the reduction of 2,3-digeranylgeranylglycerophospholipids (unsaturated archaeols) into 2,3-diphytanylglycerophospholipids (saturated archaeols) in the biosynthesis of archaeal membrane lipids. Catalyzes the formation of archaetidic acid (2,3-di-O-phytanyl-sn-glyceryl phosphate) from 2,3-di-O-geranylgeranylglyceryl phosphate (DGGGP) via the hydrogenation of each double bond of the isoprenoid chains. Is also probably able to reduce double bonds of geranyl groups in CDP-2,3-bis-O-(geranylgeranyl)-sn-glycerol and archaetidylserine, thus acting at various stages in the biosynthesis of archaeal membrane lipids. This Thermococcus gammatolerans (strain DSM 15229 / JCM 11827 / EJ3) protein is Digeranylgeranylglycerophospholipid reductase.